The following is a 106-amino-acid chain: Protein Rev (106 aa).

Residues 8–16 are homomultimerization; it reads LIKFLYQSN. Positions 14–39 are disordered; the sequence is QSNPPPKPEGTRQARRNRRRRWRERQ. A Nuclear localization signal and RNA-binding (RRE) motif is present at residues 24–40; sequence TRQARRNRRRRWRERQR. Residues 26-37 are compositionally biased toward basic residues; the sequence is QARRNRRRRWRE. The Nuclear export signal and binding to XPO1 signature appears at 63–74; that stretch reads LQLPPLERLTLD. A phosphoserine; by host mark is found at Ser-82 and Ser-89. Residues 82–106 are disordered; sequence SGTQGVGSPQILVESPTVLESGTKE.

This sequence belongs to the HIV-1 REV protein family. Homomultimer; when bound to the RRE. Multimeric assembly is essential for activity and may involve XPO1. Binds to human KPNB1, XPO1, TNPO1, RANBP5 and IPO7. Interacts with the viral Integrase. Interacts with human KHDRBS1. Interacts with human NAP1; this interaction decreases Rev multimerization and stimulates its activity. Interacts with human DEAD-box helicases DDX3 and DDX24; these interactions may serve for viral RNA export to the cytoplasm and packaging, respectively. Interacts with human PSIP1; this interaction may inhibit HIV-1 DNA integration by promoting dissociation of the Integrase-LEDGF/p75 complex. Asymmetrically arginine dimethylated at one site by host PRMT6. Methylation impairs the RNA-binding activity and export of viral RNA from the nucleus to the cytoplasm. In terms of processing, phosphorylated by protein kinase CK2. Presence of, and maybe binding to the N-terminus of the regulatory beta subunit of CK2 is necessary for CK2-mediated Rev's phosphorylation.

Its subcellular location is the host nucleus. The protein localises to the host nucleolus. It localises to the host cytoplasm. Functionally, escorts unspliced or incompletely spliced viral pre-mRNAs (late transcripts) out of the nucleus of infected cells. These pre-mRNAs carry a recognition sequence called Rev responsive element (RRE) located in the env gene, that is not present in fully spliced viral mRNAs (early transcripts). This function is essential since most viral proteins are translated from unspliced or partially spliced pre-mRNAs which cannot exit the nucleus by the pathway used by fully processed cellular mRNAs. Rev itself is translated from a fully spliced mRNA that readily exits the nucleus. Rev's nuclear localization signal (NLS) binds directly to KPNB1/Importin beta-1 without previous binding to KPNA1/Importin alpha-1. KPNB1 binds to the GDP bound form of RAN (Ran-GDP) and targets Rev to the nucleus. In the nucleus, the conversion from Ran-GDP to Ran-GTP dissociates Rev from KPNB1 and allows Rev's binding to the RRE in viral pre-mRNAs. Rev multimerization on the RRE via cooperative assembly exposes its nuclear export signal (NES) to the surface. Rev can then form a complex with XPO1/CRM1 and Ran-GTP, leading to nuclear export of the complex. Conversion from Ran-GTP to Ran-GDP mediates dissociation of the Rev/RRE/XPO1/RAN complex, so that Rev can return to the nucleus for a subsequent round of export. Beside KPNB1, also seems to interact with TNPO1/Transportin-1, RANBP5/IPO5 and IPO7/RANBP7 for nuclear import. The nucleoporin-like HRB/RIP is an essential cofactor that probably indirectly interacts with Rev to release HIV RNAs from the perinuclear region to the cytoplasm. This Homo sapiens (Human) protein is Protein Rev.